The primary structure comprises 524 residues: Probable beta-1,4-xylosyltransferase IRX14 (524 aa).

Topologically, residues 1-51 are cytoplasmic; it reads MMKSLLPQSQLRRSAAAASAARSSGGGAGSGGADGAGSDGGAGGRAPATST. A disordered region spans residues 21–41; that stretch reads ARSSGGGAGSGGADGAGSDGG. Gly residues predominate over residues 24 to 41; sequence SGGGAGSGGADGAGSDGG. Residues 52–71 form a helical; Signal-anchor for type II membrane protein membrane-spanning segment; it reads FWFLLHALCCLVSLFLGFRF. Over 72–524 the chain is Lumenal; that stretch reads SRLLFFLLFS…SRSTTKRKEN (453 aa). Asn132, Asn135, Asn240, and Asn353 each carry an N-linked (GlcNAc...) asparagine glycan. Residues 492 to 524 form a disordered region; that stretch reads AELVDSKQDQEGRRLSRTDRSSRSRSTTKRKEN. Residues 495–513 show a composition bias toward basic and acidic residues; it reads VDSKQDQEGRRLSRTDRSS.

The protein belongs to the glycosyltransferase 43 family.

The protein localises to the golgi apparatus membrane. Functionally, probable beta-1,4-xylosyltransferase involved in xylan biosynthesis in cell walls. The chain is Probable beta-1,4-xylosyltransferase IRX14 from Oryza sativa subsp. japonica (Rice).